The sequence spans 424 residues: MGYFIDRRLNGKNKSMVNRQRFLRRYKSQIKQSIADAINKRSVTDIESGESVSIPIDDINEPMFHQGNGGLRHRVHPGNDHFITNDRVDRPQGGGGGGSGQGNAGKDGEGEDEFVFQISKDEYLDLLFEDLALPNLKRNQYKQLAEFKTHRAGYTSNGVPANISVVRSLQNSLARRTAMTASKRRELRELEAALTVLENSEPAQLLEEERLRKAITELKQKIARVPFIDTFDLRYKNYERRPEPSSQAVMFCLMDVSGSMDQATKDMAKRFYILLYLFLSRTYKNVDVVYIRHHTQAKEVDEQEFFYSQETGGTIVSSALKLMDEVVQERYNPAQWNIYAAQASDGDNWADDSPLCHELLAKKILPVVRYYSYIEITRRAHQTLWREYEDLEEKFDNFAIQHIREPEDIYPVFRELFHKQTVDN.

The interval 84–109 (TNDRVDRPQGGGGGGSGQGNAGKDGE) is disordered. The segment covering 92-105 (QGGGGGGSGQGNAG) has biased composition (gly residues).

This sequence belongs to the UPF0229 family.

In Yersinia pseudotuberculosis serotype IB (strain PB1/+), this protein is UPF0229 protein YPTS_2141.